The following is a 645-amino-acid chain: Acetyl-coenzyme A synthetase (645 aa).

CoA-binding positions include 190–193 (RGSK), threonine 308, and asparagine 332. ATP contacts are provided by residues 384–386 (GEP), 408–413 (DTWWQT), aspartate 497, and arginine 512. Serine 520 is a CoA binding site. Arginine 523 contacts ATP. The Mg(2+) site is built by valine 534, histidine 536, and valine 539. Arginine 581 is a CoA binding site. Lysine 606 is modified (N6-acetyllysine).

Belongs to the ATP-dependent AMP-binding enzyme family. Requires Mg(2+) as cofactor. In terms of processing, acetylated. Deacetylation by the SIR2-homolog deacetylase activates the enzyme.

The catalysed reaction is acetate + ATP + CoA = acetyl-CoA + AMP + diphosphate. Its function is as follows. Catalyzes the conversion of acetate into acetyl-CoA (AcCoA), an essential intermediate at the junction of anabolic and catabolic pathways. AcsA undergoes a two-step reaction. In the first half reaction, AcsA combines acetate with ATP to form acetyl-adenylate (AcAMP) intermediate. In the second half reaction, it can then transfer the acetyl group from AcAMP to the sulfhydryl group of CoA, forming the product AcCoA. The sequence is that of Acetyl-coenzyme A synthetase from Bdellovibrio bacteriovorus (strain ATCC 15356 / DSM 50701 / NCIMB 9529 / HD100).